The following is a 344-amino-acid chain: Probable dual-specificity RNA methyltransferase RlmN (344 aa).

The active-site Proton acceptor is glutamate 92. The region spanning 98–325 is the Radical SAM core domain; the sequence is DEDRATLCVS…TTIRASRGED (228 aa). A disulfide bridge connects residues cysteine 105 and cysteine 330. [4Fe-4S] cluster contacts are provided by cysteine 112, cysteine 116, and cysteine 119. S-adenosyl-L-methionine is bound by residues 157–158, serine 189, 211–213, and histidine 287; these read GE and SLH. The active-site S-methylcysteine intermediate is the cysteine 330.

It belongs to the radical SAM superfamily. RlmN family. It depends on [4Fe-4S] cluster as a cofactor.

The protein localises to the cytoplasm. The catalysed reaction is adenosine(2503) in 23S rRNA + 2 reduced [2Fe-2S]-[ferredoxin] + 2 S-adenosyl-L-methionine = 2-methyladenosine(2503) in 23S rRNA + 5'-deoxyadenosine + L-methionine + 2 oxidized [2Fe-2S]-[ferredoxin] + S-adenosyl-L-homocysteine. It catalyses the reaction adenosine(37) in tRNA + 2 reduced [2Fe-2S]-[ferredoxin] + 2 S-adenosyl-L-methionine = 2-methyladenosine(37) in tRNA + 5'-deoxyadenosine + L-methionine + 2 oxidized [2Fe-2S]-[ferredoxin] + S-adenosyl-L-homocysteine. In terms of biological role, specifically methylates position 2 of adenine 2503 in 23S rRNA and position 2 of adenine 37 in tRNAs. In Bacteroides fragilis (strain YCH46), this protein is Probable dual-specificity RNA methyltransferase RlmN.